Reading from the N-terminus, the 409-residue chain is Pentatricopeptide repeat-containing protein At5g09450, mitochondrial (409 aa).

The N-terminal 38 residues, 1-38 (MATRSLFHSLRCRLTNNGVLGSNFIRNAESSRFSKSYN), are a transit peptide targeting the mitochondrion. 6 PPR repeats span residues 155–189 (TAETYTSLLHAYAASKQTERAEALFKRIIESDSLT), 191–225 (GAITYNEMMTLYMSVGQVEKVPEVIEVLKQKKVSP), 226–256 (DIFTYNLWLSSCAATFNIDELRKILEEMRHD), 262–296 (GWVRYIDLTSIYINSSRVTNAESTLPVEAEKSISQ), 298–332 (EWITYDFLMILHTGLGNKVMIDQIWKSLRNTNQIL), and 333–367 (SSRSYICVLSSYLMLGHLREAEEIIHQWKESKTTE).

This sequence belongs to the PPR family. P subfamily.

The protein localises to the mitochondrion. This chain is Pentatricopeptide repeat-containing protein At5g09450, mitochondrial, found in Arabidopsis thaliana (Mouse-ear cress).